We begin with the raw amino-acid sequence, 271 residues long: Type III pantothenate kinase (271 aa).

6–13 lines the ATP pocket; that stretch reads DVRNTNIV. 109–112 provides a ligand contact to substrate; it reads GADR. The active-site Proton acceptor is D111. D131 serves as a coordination point for K(+). Residue T134 participates in ATP binding. Position 186 (T186) interacts with substrate.

Belongs to the type III pantothenate kinase family. Homodimer. The cofactor is NH4(+). K(+) is required as a cofactor.

Its subcellular location is the cytoplasm. It catalyses the reaction (R)-pantothenate + ATP = (R)-4'-phosphopantothenate + ADP + H(+). Its pathway is cofactor biosynthesis; coenzyme A biosynthesis; CoA from (R)-pantothenate: step 1/5. In terms of biological role, catalyzes the phosphorylation of pantothenate (Pan), the first step in CoA biosynthesis. This Rhodococcus jostii (strain RHA1) protein is Type III pantothenate kinase.